Here is a 162-residue protein sequence, read N- to C-terminus: Crossover junction endodeoxyribonuclease RuvC (162 aa).

Catalysis depends on residues Asp-7, Glu-67, and Asp-140. Residues Asp-7, Glu-67, and Asp-140 each coordinate Mg(2+).

The protein belongs to the RuvC family. Homodimer which binds Holliday junction (HJ) DNA. The HJ becomes 2-fold symmetrical on binding to RuvC with unstacked arms; it has a different conformation from HJ DNA in complex with RuvA. In the full resolvosome a probable DNA-RuvA(4)-RuvB(12)-RuvC(2) complex forms which resolves the HJ. Requires Mg(2+) as cofactor.

Its subcellular location is the cytoplasm. It catalyses the reaction Endonucleolytic cleavage at a junction such as a reciprocal single-stranded crossover between two homologous DNA duplexes (Holliday junction).. The RuvA-RuvB-RuvC complex processes Holliday junction (HJ) DNA during genetic recombination and DNA repair. Endonuclease that resolves HJ intermediates. Cleaves cruciform DNA by making single-stranded nicks across the HJ at symmetrical positions within the homologous arms, yielding a 5'-phosphate and a 3'-hydroxyl group; requires a central core of homology in the junction. The consensus cleavage sequence is 5'-(A/T)TT(C/G)-3'. Cleavage occurs on the 3'-side of the TT dinucleotide at the point of strand exchange. HJ branch migration catalyzed by RuvA-RuvB allows RuvC to scan DNA until it finds its consensus sequence, where it cleaves and resolves the cruciform DNA. The protein is Crossover junction endodeoxyribonuclease RuvC of Wolinella succinogenes (strain ATCC 29543 / DSM 1740 / CCUG 13145 / JCM 31913 / LMG 7466 / NCTC 11488 / FDC 602W) (Vibrio succinogenes).